Consider the following 202-residue polypeptide: LexA repressor (202 aa).

Positions arginine 28–lysine 48 form a DNA-binding region, H-T-H motif. Residues serine 123 and lysine 160 each act as for autocatalytic cleavage activity in the active site.

The protein belongs to the peptidase S24 family. As to quaternary structure, homodimer.

The enzyme catalyses Hydrolysis of Ala-|-Gly bond in repressor LexA.. Represses a number of genes involved in the response to DNA damage (SOS response), including recA and lexA. In the presence of single-stranded DNA, RecA interacts with LexA causing an autocatalytic cleavage which disrupts the DNA-binding part of LexA, leading to derepression of the SOS regulon and eventually DNA repair. The protein is LexA repressor of Pseudomonas chlororaphis (Pseudomonas aureofaciens).